We begin with the raw amino-acid sequence, 287 residues long: Aquaporin PIP1-2 (287 aa).

Residues 1 to 37 form a disordered region; that stretch reads MEGKEEDVRLGANKFTERQPIGTAAQSQDKDYKEPPP. At 1–55 the chain is on the cytoplasmic side; it reads MEGKEEDVRLGANKFTERQPIGTAAQSQDKDYKEPPPAPLFEPGELSSWSFYRAG. The helical transmembrane segment at 56–76 threads the bilayer; that stretch reads IAEFVATFLFLYITILTVMGV. Over 77-89 the chain is Extracellular; the sequence is VKSSTKCSTVGIQ. A helical membrane pass occupies residues 90–110; sequence GIAWAFGGMIFALVYCTAGIS. The Cytoplasmic portion of the chain corresponds to 111–133; it reads GGHINPAVTFGLFLARKLSLTRA. The NPA 1 signature appears at 115 to 117; it reads NPA. A helical membrane pass occupies residues 134–154; sequence LFYMVMQCLGAICGAGVVKGF. The Extracellular portion of the chain corresponds to 155–175; it reads QKGLYENNGGGANVVAPGYTK. The chain crosses the membrane as a helical span at residues 176–196; sequence GDGLGAEIVGTFILVYTVFSA. At 197–209 the chain is on the cytoplasmic side; sequence TDAKRSARDSHVP. A helical transmembrane segment spans residues 210–230; sequence ILAPLPIGFAVFLVHLATIPI. The Extracellular portion of the chain corresponds to 231–257; the sequence is TGTGINPARSLGAAIIYNKGHAWDDHW. The short motif at 236–238 is the NPA 2 element; that stretch reads NPA. The helical transmembrane segment at 258 to 278 threads the bilayer; it reads IFWVGPFIGAALAALYHQVVI. Topologically, residues 279 to 287 are cytoplasmic; the sequence is RAIPFKSRS.

It belongs to the MIP/aquaporin (TC 1.A.8) family. PIP (TC 1.A.8.11) subfamily. As to expression, barely detectable in roots, leaves and fruits.

The protein localises to the cell membrane. Functionally, water channel required to facilitate the transport of water across cell membrane; mercury-insensitive. Contributes to the tolerance to multiple abiotic stresses including salt (NaCl), cold and water deprivation, by modulating cytosolic K(+)/Na(+) ratio, maintaining osmotic balance, and reducing membrane injury (e.g. oxidative injury). This Musa acuminata subsp. malaccensis (Wild banana) protein is Aquaporin PIP1-2.